Consider the following 437-residue polypeptide: Trigger factor (437 aa).

Residues 161 to 246 enclose the PPIase FKBP-type domain; sequence GDQVNINFVG…VNSVSEAVLP (86 aa).

Belongs to the FKBP-type PPIase family. Tig subfamily.

It localises to the cytoplasm. The enzyme catalyses [protein]-peptidylproline (omega=180) = [protein]-peptidylproline (omega=0). Functionally, involved in protein export. Acts as a chaperone by maintaining the newly synthesized protein in an open conformation. Functions as a peptidyl-prolyl cis-trans isomerase. The polypeptide is Trigger factor (Cellvibrio japonicus (strain Ueda107) (Pseudomonas fluorescens subsp. cellulosa)).